The following is a 239-amino-acid chain: Orotidine 5'-phosphate decarboxylase (239 aa).

Substrate is bound by residues aspartate 11, lysine 33, 60–69, threonine 123, arginine 185, glutamine 194, glycine 214, and arginine 215; that span reads DLKLHDIPTT. Lysine 62 acts as the Proton donor in catalysis.

It belongs to the OMP decarboxylase family. Type 1 subfamily. As to quaternary structure, homodimer.

It catalyses the reaction orotidine 5'-phosphate + H(+) = UMP + CO2. It participates in pyrimidine metabolism; UMP biosynthesis via de novo pathway; UMP from orotate: step 2/2. Functionally, catalyzes the decarboxylation of orotidine 5'-monophosphate (OMP) to uridine 5'-monophosphate (UMP). In Bacillus subtilis (strain 168), this protein is Orotidine 5'-phosphate decarboxylase (pyrF).